A 353-amino-acid chain; its full sequence is Photosystem II protein D1 (353 aa).

Threonine 2 bears the N-acetylthreonine mark. Threonine 2 is modified (phosphothreonine). The next 3 membrane-spanning stretches (helical) occupy residues 29–46, 118–133, and 142–156; these read YIGW…TATS, HFLL…EWEL, and WIAV…AAAA. Histidine 118 provides a ligand contact to chlorophyll a. Tyrosine 126 provides a ligand contact to pheophytin a. [CaMn4O5] cluster contacts are provided by aspartate 170 and glutamate 189. Residues 197 to 218 traverse the membrane as a helical segment; sequence FHMLGVAGVFGGSLFSAMHGSL. A chlorophyll a-binding site is contributed by histidine 198. Residues histidine 215 and 264 to 265 contribute to the a quinone site; that span reads SF. Histidine 215 is a Fe cation binding site. A Fe cation-binding site is contributed by histidine 272. Residues 274–288 form a helical membrane-spanning segment; the sequence is FLAAWPVVGIWFTAL. [CaMn4O5] cluster contacts are provided by histidine 332, glutamate 333, aspartate 342, and alanine 344. A propeptide spanning residues 345–353 is cleaved from the precursor; sequence AVEAPSTNG.

This sequence belongs to the reaction center PufL/M/PsbA/D family. PSII is composed of 1 copy each of membrane proteins PsbA, PsbB, PsbC, PsbD, PsbE, PsbF, PsbH, PsbI, PsbJ, PsbK, PsbL, PsbM, PsbT, PsbX, PsbY, PsbZ, Psb30/Ycf12, at least 3 peripheral proteins of the oxygen-evolving complex and a large number of cofactors. It forms dimeric complexes. The D1/D2 heterodimer binds P680, chlorophylls that are the primary electron donor of PSII, and subsequent electron acceptors. It shares a non-heme iron and each subunit binds pheophytin, quinone, additional chlorophylls, carotenoids and lipids. D1 provides most of the ligands for the Mn4-Ca-O5 cluster of the oxygen-evolving complex (OEC). There is also a Cl(-1) ion associated with D1 and D2, which is required for oxygen evolution. The PSII complex binds additional chlorophylls, carotenoids and specific lipids. serves as cofactor. Tyr-161 forms a radical intermediate that is referred to as redox-active TyrZ, YZ or Y-Z. In terms of processing, C-terminally processed by CTPA; processing is essential to allow assembly of the oxygen-evolving complex and thus photosynthetic growth.

Its subcellular location is the plastid. The protein resides in the chloroplast thylakoid membrane. It carries out the reaction 2 a plastoquinone + 4 hnu + 2 H2O = 2 a plastoquinol + O2. Its function is as follows. Photosystem II (PSII) is a light-driven water:plastoquinone oxidoreductase that uses light energy to abstract electrons from H(2)O, generating O(2) and a proton gradient subsequently used for ATP formation. It consists of a core antenna complex that captures photons, and an electron transfer chain that converts photonic excitation into a charge separation. The D1/D2 (PsbA/PsbD) reaction center heterodimer binds P680, the primary electron donor of PSII as well as several subsequent electron acceptors. This chain is Photosystem II protein D1, found in Nandina domestica (Heavenly bamboo).